Consider the following 211-residue polypeptide: Pyridoxine/pyridoxamine 5'-phosphate oxidase (211 aa).

Substrate is bound by residues 7 to 10 and Lys65; that span reads RREY. FMN-binding positions include 60–65, 75–76, Arg81, Lys82, and Gln104; these read RIVLLK and YT. Substrate contacts are provided by Tyr122, Arg126, and Ser130. Residues 139–140 and Trp184 each bind FMN; that span reads QS. A substrate-binding site is contributed by 190 to 192; it reads RLH. Arg194 serves as a coordination point for FMN.

This sequence belongs to the pyridoxamine 5'-phosphate oxidase family. As to quaternary structure, homodimer. FMN is required as a cofactor.

The enzyme catalyses pyridoxamine 5'-phosphate + O2 + H2O = pyridoxal 5'-phosphate + H2O2 + NH4(+). It carries out the reaction pyridoxine 5'-phosphate + O2 = pyridoxal 5'-phosphate + H2O2. It participates in cofactor metabolism; pyridoxal 5'-phosphate salvage; pyridoxal 5'-phosphate from pyridoxamine 5'-phosphate: step 1/1. The protein operates within cofactor metabolism; pyridoxal 5'-phosphate salvage; pyridoxal 5'-phosphate from pyridoxine 5'-phosphate: step 1/1. Functionally, catalyzes the oxidation of either pyridoxine 5'-phosphate (PNP) or pyridoxamine 5'-phosphate (PMP) into pyridoxal 5'-phosphate (PLP). The chain is Pyridoxine/pyridoxamine 5'-phosphate oxidase from Vibrio parahaemolyticus serotype O3:K6 (strain RIMD 2210633).